The chain runs to 591 residues: Alpha-(1-&gt;6)-mannopyranosyltransferase Rv1459c (591 aa).

The next 13 helical transmembrane spans lie at Phe-40–Val-60, Val-80–Gly-100, Thr-117–Tyr-137, Ile-201–Trp-221, Val-235–Ile-255, Ala-259–Ala-279, Glu-321–Val-341, Leu-367–Trp-387, Trp-408–Leu-428, Ala-441–Gly-461, Leu-473–Ile-493, Pro-502–Ala-522, and Phe-527–Ile-547. The disordered stretch occupies residues Glu-569 to Thr-591. The span at Thr-574–Pro-584 shows a compositional bias: low complexity.

Belongs to the MptA/B family.

It is found in the membrane. In terms of biological role, catalyzes the addition of alpha-(1-&gt;6)-mannose residue. This Mycobacterium tuberculosis (strain ATCC 25618 / H37Rv) protein is Alpha-(1-&gt;6)-mannopyranosyltransferase Rv1459c.